Reading from the N-terminus, the 630-residue chain is Scarecrow-like protein 34 (630 aa).

In terms of domain architecture, GRAS spans 240 to 628 (KKKKSQVVDF…RTLYASSCWV (389 aa)). The interval 247-312 (VDFRTLLTHC…GSTGPMIQTY (66 aa)) is leucine repeat I (LRI). The segment at 331 to 396 (YRVYLSSSPF…DVPRKLRITG (66 aa)) is VHIID. The VHIID motif lies at 362–366 (LHIVD). Positions 412 to 444 (ETGRRLAEYCKRFNVPFEYKAIASQNWETIRIE) are leucine repeat II (LRII). The tract at residues 454-549 (LAVNAGLRLK…REFYGREAMN (96 aa)) is PFYRE. The segment at 552-628 (ACEEADRVER…RTLYASSCWV (77 aa)) is SAW.

This sequence belongs to the GRAS family.

Its subcellular location is the nucleus. Probable transcription factor involved in plant development. This chain is Scarecrow-like protein 34 (SCL34), found in Arabidopsis thaliana (Mouse-ear cress).